The chain runs to 398 residues: Neuroplastin (398 aa).

An N-terminal signal peptide occupies residues M1 to A28. 3 Ig-like domains span residues Q29–T134, P148–K235, and P238–T329. At Q29–P339 the chain is on the extracellular side. A disulfide bridge connects residues C52 and C116. Residues R149–S161 form a narpin; mediates binding with FGFR1 and has antidepressant-like activity region. Cysteines 170 and 218 form a disulfide. Residues N171, N197, N229, N284, N296, and N317 are each glycosylated (N-linked (GlcNAc...) asparagine). Cysteines 259 and 316 form a disulfide. The chain crosses the membrane as a helical span at residues L340–Y360. Residues E361 to N398 are Cytoplasmic-facing. Residues R365–N398 are disordered.

As to quaternary structure, interacts with ATP2B1; this interaction stabilizes ATP2B1 and increases ATPase activity; this interaction controls T cell calcium homeostasis following T cell activation. Interacts with XKR8; promoting its localization at the cell membrane. As to expression, isoform 1 is ubiquitously expressed. Isoform 2 is expressed in brain cortex and cerebellum (at protein level).

It localises to the cell membrane. It is found in the postsynaptic density. Its function is as follows. Probable homophilic and heterophilic cell adhesion molecule involved in long term potentiation at hippocampal excitatory synapses through activation of p38MAPK. May also regulate neurite outgrowth by activating the FGFR1 signaling pathway. May play a role in synaptic plasticity. Also acts as a chaperone for ATP2B1; stabilizes ATP2B1 and increases its ATPase activity. Promotes localization of XKR8 at the cell membrane. This chain is Neuroplastin (NPTN), found in Homo sapiens (Human).